The sequence spans 136 residues: Protein BUNDLE SHEATH DEFECTIVE 2, chloroplastic (136 aa).

Residues 1 to 56 (MANSLCFFSSPPTFCFQSPSKNPKPSHFFSTNDNTSSLVQKRELLQTSRSQSFEVK) constitute a chloroplast transit peptide. A CR-type zinc finger spans residues 62–133 (PQGTKPNSLV…AGFIGGFLST (72 aa)). Positions 72, 75, 78, 80, 83, 86, 107, 110, 115, 118, and 121 each coordinate Zn(2+).

The protein belongs to the BSD2 chaperone family. As to quaternary structure, interacts with the RuBisCo large subunit (RbcL) assembled as an intermediate complex made of eight RbcL and eight BSD2 subunits.

It localises to the plastid. It is found in the chloroplast stroma. In terms of biological role, chloroplast chaperone required for RuBisCo biogenesis and translational regulation of the RuBisCo large subunit (RbcL). Stabilizes an end-state assembly intermediate of eight RbcL subunits until the small subunits (RBCSs) become available to produce a complete stable RuBisCo complex containing eight small and eight large subunits. In Arabidopsis thaliana (Mouse-ear cress), this protein is Protein BUNDLE SHEATH DEFECTIVE 2, chloroplastic.